The primary structure comprises 483 residues: Probable Xaa-Pro aminopeptidase MCYG_06503 (483 aa).

Mn(2+) is bound by residues D233, D244, E409, and E453.

Belongs to the peptidase M24B family. Mn(2+) is required as a cofactor.

It carries out the reaction Release of any N-terminal amino acid, including proline, that is linked to proline, even from a dipeptide or tripeptide.. In terms of biological role, catalyzes the removal of a penultimate prolyl residue from the N-termini of peptides. In Arthroderma otae (strain ATCC MYA-4605 / CBS 113480) (Microsporum canis), this protein is Probable Xaa-Pro aminopeptidase MCYG_06503.